The following is a 309-amino-acid chain: Tyrosine recombinase XerD (309 aa).

The region spanning 3-88 (MRASLAIENF…ALRQFFRFLY (86 aa)) is the Core-binding (CB) domain. One can recognise a Tyr recombinase domain in the interval 109-302 (PLPKIMSVEN…LEERLHKLVS (194 aa)). Residues arginine 158, lysine 182, histidine 254, arginine 257, and histidine 280 contribute to the active site. Tyrosine 289 serves as the catalytic O-(3'-phospho-DNA)-tyrosine intermediate.

It belongs to the 'phage' integrase family. XerD subfamily. Forms a cyclic heterotetrameric complex composed of two molecules of XerC and two molecules of XerD.

The protein resides in the cytoplasm. In terms of biological role, site-specific tyrosine recombinase, which acts by catalyzing the cutting and rejoining of the recombining DNA molecules. The XerC-XerD complex is essential to convert dimers of the bacterial chromosome into monomers to permit their segregation at cell division. It also contributes to the segregational stability of plasmids. This chain is Tyrosine recombinase XerD, found in Brucella melitensis biotype 1 (strain ATCC 23456 / CCUG 17765 / NCTC 10094 / 16M).